The primary structure comprises 366 residues: UDP-N-acetylglucosamine--N-acetylmuramyl-(pentapeptide) pyrophosphoryl-undecaprenol N-acetylglucosamine transferase (366 aa).

UDP-N-acetyl-alpha-D-glucosamine-binding positions include 15-17, Asn-127, Arg-175, Ser-201, Ile-255, and Gln-300; that span reads TGG.

The protein belongs to the glycosyltransferase 28 family. MurG subfamily.

It is found in the cell inner membrane. It catalyses the reaction di-trans,octa-cis-undecaprenyl diphospho-N-acetyl-alpha-D-muramoyl-L-alanyl-D-glutamyl-meso-2,6-diaminopimeloyl-D-alanyl-D-alanine + UDP-N-acetyl-alpha-D-glucosamine = di-trans,octa-cis-undecaprenyl diphospho-[N-acetyl-alpha-D-glucosaminyl-(1-&gt;4)]-N-acetyl-alpha-D-muramoyl-L-alanyl-D-glutamyl-meso-2,6-diaminopimeloyl-D-alanyl-D-alanine + UDP + H(+). The protein operates within cell wall biogenesis; peptidoglycan biosynthesis. Functionally, cell wall formation. Catalyzes the transfer of a GlcNAc subunit on undecaprenyl-pyrophosphoryl-MurNAc-pentapeptide (lipid intermediate I) to form undecaprenyl-pyrophosphoryl-MurNAc-(pentapeptide)GlcNAc (lipid intermediate II). The chain is UDP-N-acetylglucosamine--N-acetylmuramyl-(pentapeptide) pyrophosphoryl-undecaprenol N-acetylglucosamine transferase from Thiobacillus denitrificans (strain ATCC 25259 / T1).